The chain runs to 429 residues: Trigger factor (429 aa).

A PPIase FKBP-type domain is found at 163–248 (GDFVVIDFVG…IKEIKVKETP (86 aa)).

It belongs to the FKBP-type PPIase family. Tig subfamily.

The protein localises to the cytoplasm. The enzyme catalyses [protein]-peptidylproline (omega=180) = [protein]-peptidylproline (omega=0). Its function is as follows. Involved in protein export. Acts as a chaperone by maintaining the newly synthesized protein in an open conformation. Functions as a peptidyl-prolyl cis-trans isomerase. This chain is Trigger factor, found in Halothermothrix orenii (strain H 168 / OCM 544 / DSM 9562).